The primary structure comprises 137 residues: Large ribosomal subunit protein uL16 (137 aa).

Belongs to the universal ribosomal protein uL16 family. Part of the 50S ribosomal subunit.

Its function is as follows. Binds 23S rRNA and is also seen to make contacts with the A and possibly P site tRNAs. The chain is Large ribosomal subunit protein uL16 from Ruegeria sp. (strain TM1040) (Silicibacter sp.).